Reading from the N-terminus, the 307-residue chain is 4-hydroxybenzoate octaprenyltransferase (307 aa).

7 consecutive transmembrane segments (helical) span residues 27 to 47 (AGWL…AGGF), 50 to 70 (WHLL…GCCI), 101 to 121 (LAVG…TNAL), 142 to 162 (CVAM…PMAF), 179 to 199 (AAVP…VLAY), 239 to 259 (LLAW…AAGL), and 285 to 305 (FRLN…DLGW).

This sequence belongs to the UbiA prenyltransferase family. Mg(2+) serves as cofactor.

The protein localises to the cell inner membrane. It carries out the reaction all-trans-octaprenyl diphosphate + 4-hydroxybenzoate = 4-hydroxy-3-(all-trans-octaprenyl)benzoate + diphosphate. The protein operates within cofactor biosynthesis; ubiquinone biosynthesis. Catalyzes the prenylation of para-hydroxybenzoate (PHB) with an all-trans polyprenyl group. Mediates the second step in the final reaction sequence of ubiquinone-8 (UQ-8) biosynthesis, which is the condensation of the polyisoprenoid side chain with PHB, generating the first membrane-bound Q intermediate 3-octaprenyl-4-hydroxybenzoate. The sequence is that of 4-hydroxybenzoate octaprenyltransferase from Methylibium petroleiphilum (strain ATCC BAA-1232 / LMG 22953 / PM1).